A 384-amino-acid chain; its full sequence is Galactokinase (384 aa).

34–37 lines the substrate pocket; it reads EHTD. Position 123-129 (123-129) interacts with ATP; it reads SSGLSSS. Mg(2+) contacts are provided by S129 and E161. D173 acts as the Proton acceptor in catalysis. Substrate is bound at residue Y222.

It belongs to the GHMP kinase family. GalK subfamily.

It localises to the cytoplasm. It catalyses the reaction alpha-D-galactose + ATP = alpha-D-galactose 1-phosphate + ADP + H(+). It functions in the pathway carbohydrate metabolism; galactose metabolism. Functionally, catalyzes the transfer of the gamma-phosphate of ATP to D-galactose to form alpha-D-galactose-1-phosphate (Gal-1-P). This is Galactokinase from Actinobacillus pleuropneumoniae serotype 3 (strain JL03).